The sequence spans 103 residues: Large ribosomal subunit protein bL21 (103 aa).

It belongs to the bacterial ribosomal protein bL21 family. In terms of assembly, part of the 50S ribosomal subunit. Contacts protein L20.

In terms of biological role, this protein binds to 23S rRNA in the presence of protein L20. In Cupriavidus pinatubonensis (strain JMP 134 / LMG 1197) (Cupriavidus necator (strain JMP 134)), this protein is Large ribosomal subunit protein bL21.